A 301-amino-acid polypeptide reads, in one-letter code: MNQIEKTGELSASRFTVRDFTELVKIGIVNSNTITAFTGMWLAFQLNGISFIQNVDVIFFTIVGSALIVAASGAFNNVIDRDIDGIMERTKNRPTMTGKISGKRALMVALVLGVVGTIMLFMTTWQAGVLGVIGVFLYVVVYSLYAKRKLVSNTVIGSFSGAVPPLIGWFAVEPSFSMVPIMLFLVMFCWQPPHFYAIAIKRKDEYAAAGIPMLPVVKGIERTKKSMFFWVILLTILPFFMFDLGIVYVILATLLNIGWLALSVYGFKMADSIKWAKWMFIYSLNYMTILFVAMVVISIFL.

The next 9 helical transmembrane spans lie at Phe-20–Leu-42, Val-55–Phe-75, Ala-105–Trp-125, Gln-126–Ala-146, Leu-150–Val-172, Phe-176–Ile-198, Met-227–Val-247, Val-249–Met-269, and Phe-280–Phe-300.

The protein belongs to the UbiA prenyltransferase family. Protoheme IX farnesyltransferase subfamily. In terms of assembly, interacts with CtaA.

Its subcellular location is the cell membrane. It catalyses the reaction heme b + (2E,6E)-farnesyl diphosphate + H2O = Fe(II)-heme o + diphosphate. It participates in porphyrin-containing compound metabolism; heme O biosynthesis; heme O from protoheme: step 1/1. In terms of biological role, converts heme B (protoheme IX) to heme O by substitution of the vinyl group on carbon 2 of heme B porphyrin ring with a hydroxyethyl farnesyl side group. The protein is Protoheme IX farnesyltransferase of Listeria welshimeri serovar 6b (strain ATCC 35897 / DSM 20650 / CCUG 15529 / CIP 8149 / NCTC 11857 / SLCC 5334 / V8).